A 177-amino-acid polypeptide reads, in one-letter code: Meiotic chromosome segregation protein C17A2.07c (177 aa).

The segment at 71–90 (EDDSINKPTEEADEAPRTQL) is disordered. The segment covering 74 to 86 (SINKPTEEADEAP) has biased composition (basic and acidic residues).

The protein resides in the nucleus. Functionally, involved in meiotic chromosome segregation. The chain is Meiotic chromosome segregation protein C17A2.07c from Schizosaccharomyces pombe (strain 972 / ATCC 24843) (Fission yeast).